Here is a 526-residue protein sequence, read N- to C-terminus: Delayed-rectifier potassium channel regulatory subunit KCNS1 (526 aa).

Over 1–217 the chain is Cytoplasmic; that stretch reads MLMLLVRGTH…LTMENPGYSL (217 aa). The chain crosses the membrane as a helical span at residues 218 to 239; that stretch reads PSKLFSCVSISVVLASIAAMCI. Topologically, residues 240–270 are extracellular; it reads HSLPEYQAREAAAAVAAVAAGRSPEGVRDDP. Residues 271-293 form a helical membrane-spanning segment; the sequence is VLRRLEYFCIAWFSFEVSSRLLL. The Cytoplasmic segment spans residues 294–304; sequence APSTRNFFCHP. A helical membrane pass occupies residues 305–322; that stretch reads LNLIDIVSVLPFYLTLLA. The Extracellular segment spans residues 323–337; it reads GVALGDQGGKEFGHL. Residues 338 to 358 form a helical; Voltage-sensor membrane-spanning segment; sequence GKVVQVFRLMRIFRVLKLARH. Topologically, residues 359 to 373 are cytoplasmic; sequence STGLRSLGATLKHSY. Residues 374-395 form a helical membrane-spanning segment; sequence REVGILLLYLAVGVSVFSGVAY. Residues 396–408 are Extracellular-facing; that stretch reads TAEKEEDVGFNTI. The helical intramembrane region spans 409 to 420; that stretch reads PACWWWGTVSMT. Positions 421-426 match the Selectivity filter motif; the sequence is TVGYGD. Residues 421–428 lie within the membrane without spanning it; it reads TVGYGDVV. Over 429 to 435 the chain is Extracellular; sequence PVTVAGK. A helical transmembrane segment spans residues 436-464; the sequence is LAASGCILGGILVVALPITIIFNKFSHFY. Residues 465–526 are Cytoplasmic-facing; sequence RRQKALEAAV…PSEPPHPQMY (62 aa). Residues 491–526 form a disordered region; sequence GVSEASLETSRETSQEGRSADLESQAPSEPPHPQMY. Residues 499–511 show a composition bias toward basic and acidic residues; that stretch reads TSRETSQEGRSAD.

It belongs to the potassium channel family. S (TC 1.A.1.2) subfamily. Kv9.1/KCNS1 sub-subfamily. In terms of assembly, heterotetramer with KCNB1. Heterotetramer with KCNB2. Does not form homomultimers.

Its subcellular location is the cell membrane. Its function is as follows. Potassium channel regulatory subunit that modulate the delayed rectifier voltage-gated potassium channel activity of KCNB1 and KCNB2 by altering their kinetics, expression levels, and shifting the half-inactivation potential to more polarized values. While it does not form functional channels on its own, it can form functional heterotetrameric channels with KCNB1 and KCNB2. Each regulatory subunit has unique regulatory properties that can lead to extensive inhibition, significant changes in kinetics, and/or substantial shifts in the voltage dependencies of the inactivation process. This Pongo abelii (Sumatran orangutan) protein is Delayed-rectifier potassium channel regulatory subunit KCNS1.